The sequence spans 290 residues: Sodium/potassium-transporting ATPase subunit beta-2 (290 aa).

Residues 1-39 (MVIQKEKKSCGQVVEEWKEFVWNPRTHQFMGRTGTSWAF) lie on the Cytoplasmic side of the membrane. The helical; Signal-anchor for type II membrane protein transmembrane segment at 40-67 (ILLFYLVFYGFLTAMFTLTMWVMLQTVS) threads the bilayer. The Extracellular segment spans residues 68–290 (DHTPKYQDRL…VAFKLRINKT (223 aa)). Residues N96 and N118 are each glycosylated (N-linked (GlcNAc...) asparagine). C129 and C150 are disulfide-bonded. The N-linked (GlcNAc...) asparagine glycan is linked to N153. A disulfide bridge links C160 with C177. Residues N193, N197, and N238 are each glycosylated (N-linked (GlcNAc...) asparagine). The interval 193–289 (NQSMNVTCVG…RVAFKLRINK (97 aa)) is immunoglobulin-like. C200 and C261 are disulfide-bonded.

This sequence belongs to the X(+)/potassium ATPases subunit beta family. The sodium/potassium-transporting ATPase is composed of a catalytic alpha subunit, an auxiliary non-catalytic beta subunit and an additional regulatory subunit. Interacts with BSG.

The protein resides in the cell membrane. Its function is as follows. This is the non-catalytic component of the active enzyme, which catalyzes the hydrolysis of ATP coupled with the exchange of Na(+) and K(+) ions across the plasma membrane. The exact function of the beta-2 subunit is not known. Functionally, mediates cell adhesion of neurons and astrocytes, and promotes neurite outgrowth. The polypeptide is Sodium/potassium-transporting ATPase subunit beta-2 (ATP1B2) (Bos taurus (Bovine)).